Reading from the N-terminus, the 234-residue chain is MLVELNLDAGNIISEDVHRIGILAVGSHLENHGPALPIDTDAKIASYVALEAALRTGARFLGVLYAASEFPYVKHGIHMDRDELVERELKPVLRKARRLLNLEAAVIVNGHGGNKLEDCMDDLEEELGLEIAWNNRIVEIEGPHAGSGELSAGLILGIADLRRLDECIPELYPEIGMIGLKEAREANREIDKAARICERDGVNPDPVLGQRILDDAVESVISDVKELLKIIQEF.

Residues E30, H32, D41, and H111 each contribute to the Fe cation site.

The protein belongs to the creatininase superfamily. FAPy deformylase family. In terms of assembly, homodimer. The cofactor is Fe(2+). Zn(2+) serves as cofactor.

The enzyme catalyses 2-amino-5-formylamino-6-(5-phospho-D-ribosylamino)pyrimidin-4(3H)-one + H2O = 2,5-diamino-6-(1-D-ribosylamino)pyrimidin-4(3H)-one 5'-phosphate + formate + H(+). The protein operates within cofactor biosynthesis; coenzyme F420 biosynthesis. It participates in cofactor biosynthesis; riboflavin biosynthesis. Catalyzes the hydrolysis of the formamide of 2-amino-5-formylamino-6-ribosylamino-4(3H)-pyrimidinone 5'-monophosphate (FAPy) to form 2,5-diamino-6-ribosylamino-4(3H)-pyrimidinone 5'-phosphate (APy). This is 2-amino-5-formylamino-6-ribosylaminopyrimidin-4(3H)-one 5'-monophosphate deformylase from Methanothermobacter thermautotrophicus (strain ATCC 29096 / DSM 1053 / JCM 10044 / NBRC 100330 / Delta H) (Methanobacterium thermoautotrophicum).